The sequence spans 183 residues: UPF0398 protein MCCL_1095 (183 aa).

This sequence belongs to the UPF0398 family.

This chain is UPF0398 protein MCCL_1095, found in Macrococcus caseolyticus (strain JCSC5402) (Macrococcoides caseolyticum).